We begin with the raw amino-acid sequence, 261 residues long: uncharacterized protein (261 aa).

This is an uncharacterized protein from Mycobacterium tuberculosis (strain CDC 1551 / Oshkosh).